A 282-amino-acid polypeptide reads, in one-letter code: Light-independent protochlorophyllide reductase iron-sulfur ATP-binding protein (282 aa).

ATP is bound by residues 10 to 15 and Lys-39; that span reads GIGKST. Ser-14 is a Mg(2+) binding site. [4Fe-4S] cluster is bound by residues Cys-95 and Cys-129. ATP is bound at residue 180-181; sequence NR.

The protein belongs to the NifH/BchL/ChlL family. In terms of assembly, homodimer. Protochlorophyllide reductase is composed of three subunits; ChlL, ChlN and ChlB. The cofactor is [4Fe-4S] cluster.

It localises to the plastid. The protein localises to the cyanelle. The catalysed reaction is chlorophyllide a + oxidized 2[4Fe-4S]-[ferredoxin] + 2 ADP + 2 phosphate = protochlorophyllide a + reduced 2[4Fe-4S]-[ferredoxin] + 2 ATP + 2 H2O. Its pathway is porphyrin-containing compound metabolism; chlorophyll biosynthesis (light-independent). Functionally, component of the dark-operative protochlorophyllide reductase (DPOR) that uses Mg-ATP and reduced ferredoxin to reduce ring D of protochlorophyllide (Pchlide) to form chlorophyllide a (Chlide). This reaction is light-independent. The L component serves as a unique electron donor to the NB-component of the complex, and binds Mg-ATP. The polypeptide is Light-independent protochlorophyllide reductase iron-sulfur ATP-binding protein (Cyanophora paradoxa).